The following is a 448-amino-acid chain: Phosphoglucosamine mutase (448 aa).

The active-site Phosphoserine intermediate is Ser99. Mg(2+) contacts are provided by Ser99, Asp238, Asp240, and Asp242. The residue at position 99 (Ser99) is a Phosphoserine.

The protein belongs to the phosphohexose mutase family. Mg(2+) is required as a cofactor. Activated by phosphorylation.

The enzyme catalyses alpha-D-glucosamine 1-phosphate = D-glucosamine 6-phosphate. In terms of biological role, catalyzes the conversion of glucosamine-6-phosphate to glucosamine-1-phosphate. This Marinomonas sp. (strain MWYL1) protein is Phosphoglucosamine mutase.